The chain runs to 463 residues: Nitrogenase vanadium-iron protein beta chain (463 aa).

Positions 20, 45, 104, and 142 each coordinate [8Fe-7S] cluster.

It belongs to the NifD/NifK/NifE/NifN family. In terms of assembly, hexamer of two alpha, two beta, and two delta chains. Requires [8Fe-7S] cluster as cofactor.

The catalysed reaction is N2 + 8 reduced [2Fe-2S]-[ferredoxin] + 16 ATP + 16 H2O = H2 + 8 oxidized [2Fe-2S]-[ferredoxin] + 2 NH4(+) + 16 ADP + 16 phosphate + 6 H(+). Its function is as follows. This vanadium-iron protein is part of the nitrogenase complex that catalyzes the key enzymatic reactions in nitrogen fixation. The polypeptide is Nitrogenase vanadium-iron protein beta chain (vnfK) (Trichormus variabilis (strain ATCC 29413 / PCC 7937) (Anabaena variabilis)).